The sequence spans 674 residues: Carcinine transporter (674 aa).

At 1–53 the chain is on the cytoplasmic side; the sequence is MSDIEDNDGDEYDELSELRQRHKPESQPSVDEAFDLDDLLPTIGEFGKYQKLL. Residues 54-74 form a helical membrane-spanning segment; sequence VFGICLPACIPCGFCAFNQLF. Residues 75-178 lie on the Extracellular side of the membrane; sequence MADTPDDYWC…DLVCDQDIYP (104 aa). 3 N-linked (GlcNAc...) asparagine glycosylation sites follow: asparagine 122, asparagine 141, and asparagine 156. The helical transmembrane segment at 179-199 threads the bilayer; it reads TIGLAALNTGGPVGVYLFGLL. Residues 200-206 lie on the Cytoplasmic side of the membrane; the sequence is NDRGGRR. A helical transmembrane segment spans residues 207–227; that stretch reads LSYFVCLATLLAGSLMTSLSK. Residues 228-236 lie on the Extracellular side of the membrane; sequence DFWTWAGSR. The helical transmembrane segment at 237 to 257 threads the bilayer; it reads VIVGLTIPAVYQIPFIISLEL. Residues 258 to 264 are Cytoplasmic-facing; that stretch reads VGENYRS. Residues 265-285 traverse the membrane as a helical segment; it reads FVTVMTCTFYTSGIMLLSGVT. Over 286–293 the chain is Extracellular; sequence YLERDWVR. A helical membrane pass occupies residues 294–314; it reads LSYITSLPFYAYFLYMFVMPE. Residues 315 to 385 lie on the Cytoplasmic side of the membrane; that stretch reads SPRWLLMRGR…CRTPNMRLKT (71 aa). The chain crosses the membrane as a helical span at residues 386 to 406; sequence ILITLSWFANETVYLGLSYYG. Topologically, residues 407 to 414 are extracellular; that stretch reads PALGTNQY. A helical membrane pass occupies residues 415 to 435; the sequence is VSFFLSAVVELPSYLCCWYFM. Residues 436–441 lie on the Cytoplasmic side of the membrane; the sequence is DTWGRR. Residues 442-462 traverse the membrane as a helical segment; it reads WPLSLSMILGGVACVITVMLP. Residues 463 to 469 lie on the Extracellular side of the membrane; sequence DDAVDET. Residues 470-490 traverse the membrane as a helical segment; sequence LVLYLVSKALLSASFLIIYPF. At 491 to 500 the chain is on the cytoplasmic side; the sequence is AGELYPTQVR. A helical transmembrane segment spans residues 501–521; it reads GIGIGASSYIGGLGLIGIPFI. At 522–527 the chain is on the extracellular side; the sequence is TYLGKD. A helical transmembrane segment spans residues 528-548; it reads NLKLPLVIMGFLSMLGGMTGL. Residues 549 to 674 are Cytoplasmic-facing; the sequence is RLPETLHHRL…DGTMQLTHWI (126 aa). Basic and acidic residues predominate over residues 614–631; sequence RDSRRVREPAPRIDERTP. The segment at 614-647 is disordered; that stretch reads RDSRRVREPAPRIDERTPLDTTASGSGRPVHRPS.

Belongs to the major facilitator (TC 2.A.1) superfamily. Organic cation transporter (TC 2.A.1.19) family. Expressed in photoreceptor cells.

The protein localises to the cell membrane. Its subcellular location is the cell projection. The protein resides in the axon. In terms of biological role, carcinine transporter which is required for recycling of the neurotransmitter histamine in photoreceptor neurons of the compound eye. Following histamine release from photoreceptors and its uptake by glia where it is converted to carcinine, required for the uptake of carcinine from glia into photoreceptor cells where it can be hydrolyzed by tan to form histamine and beta-alanine. This is Carcinine transporter from Drosophila melanogaster (Fruit fly).